Reading from the N-terminus, the 132-residue chain is MVMTDPISDMLTRIRNANTVRHEKLELPASKIKKEIAEILKREGFIRDYEYIEDSKQGVIRIFLKYGSSNERVITGLKRISKPGLRVYAKAGELPRVLGGLGIAIVSTSKGVMTDKEARQQQVGGEVLAYVW.

This sequence belongs to the universal ribosomal protein uS8 family. Part of the 30S ribosomal subunit. Contacts proteins S5 and S12.

Functionally, one of the primary rRNA binding proteins, it binds directly to 16S rRNA central domain where it helps coordinate assembly of the platform of the 30S subunit. This Halalkalibacterium halodurans (strain ATCC BAA-125 / DSM 18197 / FERM 7344 / JCM 9153 / C-125) (Bacillus halodurans) protein is Small ribosomal subunit protein uS8.